A 511-amino-acid chain; its full sequence is Glycoprotein (511 aa).

The first 16 residues, 1 to 16 (MKCLLCLAFLFIGVNC), serve as a signal peptide directing secretion. Topologically, residues 17-467 (KFTIVFPHNQ…FSGWKSSIAS (451 aa)) are virion surface. Residues 18-35 (FTIVFPHNQKGNWKNVPS) are trimerization. Intrachain disulfides connect Cys40–Cys300, Cys75–Cys108, Cys84–Cys130, Cys169–Cys174, Cys193–Cys240, and Cys235–Cys269. Residues 53-172 (IGTALQVKMP…QFINGKCSND (120 aa)) are fusion peptide. An N-linked (GlcNAc...) asparagine; by host glycan is attached at Asn179. Residues 259–309 (DLFAAAKFPECPEGSSISAPSQTSVDVSLIQDVERILDYSLCQETWSKIRA) are trimerization. N-linked (GlcNAc...) asparagine; by host glycosylation is present at Asn336. A trimerization region spans residues 383 to 405 (EIGPNGVLRTSSGYKFPLYMIGH). A helical transmembrane segment spans residues 468 to 488 (FFFIIGLIIGLFLVLRVGIYL). Cys489 carries S-palmitoyl cysteine; by host lipidation. Residues 489–511 (CIKLKHTRKRKIYADIEMNRLGK) are Intravirion-facing. Positions 496-506 (RKRKIYADIEM) match the basolateral targeting ex vivo motif.

The protein belongs to the vesiculovirus glycoprotein family. Homotrimer. Interacts with host LDL at target cell surface. Glycosylated by host. Palmitoylated by host.

The protein localises to the virion membrane. It localises to the host membrane. Its function is as follows. Attaches the virus to host LDL receptors, inducing clathrin-dependent endocytosis of the virion. In the endosome, the acidic pH induces conformational changes in the glycoprotein trimer, which trigger fusion between virus and endosomal membrane. In Aedes (Bovine), this protein is Glycoprotein (G).